An 82-amino-acid chain; its full sequence is MVLVQDLLHPTAASEARKHKLKTLVQGPRSYFLDVKCPGCLNITTVFSHAQTAVTCESCSTILCTPTGGKAKLSEGTSFRRK.

The C4-type zinc finger occupies C37–C59. At C40 the chain carries S-methylcysteine.

It belongs to the eukaryotic ribosomal protein eS27 family. Component of the small ribosomal subunit (SSU). Mature yeast ribosomes consist of a small (40S) and a large (60S) subunit. The 40S small subunit contains 1 molecule of ribosomal RNA (18S rRNA) and 33 different proteins (encoded by 57 genes). The large 60S subunit contains 3 rRNA molecules (25S, 5.8S and 5S rRNA) and 46 different proteins (encoded by 81 genes). Zn(2+) is required as a cofactor. Post-translationally, the N-terminus is not modified.

It localises to the cytoplasm. Component of the ribosome, a large ribonucleoprotein complex responsible for the synthesis of proteins in the cell. The small ribosomal subunit (SSU) binds messenger RNAs (mRNAs) and translates the encoded message by selecting cognate aminoacyl-transfer RNA (tRNA) molecules. The large subunit (LSU) contains the ribosomal catalytic site termed the peptidyl transferase center (PTC), which catalyzes the formation of peptide bonds, thereby polymerizing the amino acids delivered by tRNAs into a polypeptide chain. The nascent polypeptides leave the ribosome through a tunnel in the LSU and interact with protein factors that function in enzymatic processing, targeting, and the membrane insertion of nascent chains at the exit of the ribosomal tunnel. In Saccharomyces cerevisiae (strain ATCC 204508 / S288c) (Baker's yeast), this protein is Small ribosomal subunit protein eS27A.